A 506-amino-acid polypeptide reads, in one-letter code: MAAVVSAKPLCDSEPAIPAPPSVKEDNSNDTKDPEENSNDGSQPAKRRRMSGDSTPSCENSNQDFGSSYFPAENVIEYKWPPDETGEYYMLQEQVSEYLGVTSFKRKYPDLERRDLSHKEKLYLRELNVITETQCTLGLTALRSDEVIDLMIKEYPAKHAEYSVILQEKERQRITDHYKEYSQLQQQNTQKVEAGKVPEYIKKAAKKAAEFNSNLNRERMEERRAYFDLQTHIIQVPQGKYKILPSEMTKVSPYPVSLIPGQFQEYYKRYSPNELRYLPLNTALYEPPLDPLDPELLALDSDGDSDEVEEMKSEKKKTKGSSVRLSIDSSSMNMSESDNTQDTQEETPQPRPKVKEKSSTPRKEGSKRSVLSKSVSGYKPKSIPNAICGICLKGKDANKKGRSERLIHCSQCDNSGHPSCLDMSAELVAVIKKYPWQCMECKTCIICGQPHHEEEMMFCDTCDRGYHTFCVGLGALPSGRWICDCCQKVPATPKKGARKVKNSKEG.

2 disordered regions span residues Met1–Gly66 and Asp293–Gly377. Basic and acidic residues predominate over residues Val23–Glu35. Residues Gly52 to Gly66 are compositionally biased toward polar residues. The interval Met90 to Leu299 is SAY. The span at Ser326–Asp338 shows a compositional bias: low complexity. Positions Lys353–Lys367 are enriched in basic and acidic residues. A PHD-type 1; degenerate zinc finger spans residues Ile387 to Cys444. Residues Ile446–Val489 form a PHD-type 2; degenerate zinc finger.

This sequence belongs to the SAYP family. As to quaternary structure, component of neural progenitors-specific chromatin remodeling complex (npBAF complex), a subfamily of ATP-dependent SWI/SNF chromatin remodeling complexes.

It is found in the nucleus. Involved in transcription activity regulation by chromatin remodeling in the context of the neural progenitors-specific chromatin remodeling complex (npBAF complex). May play a role in the proliferation of neural progenitors. In Xenopus laevis (African clawed frog), this protein is PHD finger protein 10 (phf10).